We begin with the raw amino-acid sequence, 178 residues long: Caveolin-1 (178 aa).

N-acetylserine is present on S2. S2 carries the phosphoserine modification. The tract at residues S2 to V94 is required for homooligomerization. Over S2 to S104 the chain is Cytoplasmic. The residue at position 5 (K5) is an N6-acetyllysine; alternate. K5 is covalently cross-linked (Glycyl lysine isopeptide (Lys-Gly) (interchain with G-Cter in ubiquitin); alternate). Residue Y6 is modified to Phosphotyrosine. S9 carries the post-translational modification Phosphoserine. Y14 is subject to Phosphotyrosine; by ABL1 and INSR. The residue at position 25 (Y25) is a Phosphotyrosine. Residues K26, K30, K39, K47, and K57 each participate in a glycyl lysine isopeptide (Lys-Gly) (interchain with G-Cter in ubiquitin) cross-link. The segment at D82–V94 is interaction with CAVIN3. An intramembrane region (helical) is located at residues T105 to L125. Residues H126 to I178 are Cytoplasmic-facing. The tract at residues V131 to Q142 is interacts with SPRY1, SPRY2, SPRY3 and SPRY4. Residues C133, C143, and C156 are each lipidated (S-palmitoyl cysteine). Positions S149–F160 are interacts with SPRY1, SPRY2, and SPRY4. Residues F167–I178 form an interacts with SPRY1, SPRY2, SPRY3 and SPRY4 region.

Belongs to the caveolin family. In terms of assembly, homooligomer. Interacts (via the N-terminus) with DPP4; the interaction is direct. Forms a stable heterooligomeric complex with CAV2 that targets to lipid rafts and drives caveolae formation. Interacts with BMX, BTK, CTNNB1, CDH1, GLIPR2, JUP, NOSTRIN, SNAP25 and STX1A. Interacts with SLC7A9. Interacts with TGFBR1. Interacts with CTNNB1, CDH1 and JUP. Interacts with PACSIN2; this interaction induces membrane tubulation. Interacts with CAVIN3 (via leucine-zipper domain) in a cholesterol-sensitive manner. Interacts with EHD2 in a cholesterol-dependent manner. Interacts with CAVIN1. Forms a ternary complex with UBXN6 and VCP; mediates CAV1 targeting to lysosomes for degradation. Interacts with ABCG1; this interaction regulates ABCG1-mediated cholesterol efflux. Interacts with NEU3; this interaction enhances NEU3 sialidase activity within caveola. Interacts (via C-terminus) with SPRY1, SPRY2 (via C-terminus), SPRY3, and SPRY4. Interacts with IGFBP5; this interaction allows trafficking of IGFBP5 from the plasma membrane to the nucleus. In terms of processing, the N-terminus of both isoforms are blocked. Post-translationally, phosphorylated at Tyr-14 by ABL1 in response to oxidative stress. Ubiquitinated. Undergo monoubiquitination and multi- and/or polyubiquitination. Monoubiquitination of N-terminal lysines promotes integration in a ternary complex with UBXN6 and VCP which promotes oligomeric CAV1 targeting to lysosomes for degradation. Ubiquitinated by ZNRF1; leading to degradation and modulation of the TLR4-mediated immune response. As to expression, adipose tissue, lung, heart, skeletal muscle, stomach, small bowel, kidney, spleen and testis (at protein level).

The protein localises to the golgi apparatus membrane. It is found in the cell membrane. It localises to the membrane. Its subcellular location is the caveola. The protein resides in the membrane raft. The protein localises to the golgi apparatus. It is found in the trans-Golgi network. Its function is as follows. May act as a scaffolding protein within caveolar membranes. Forms a stable heterooligomeric complex with CAV2 that targets to lipid rafts and drives caveolae formation. Mediates the recruitment of CAVIN proteins (CAVIN1/2/3/4) to the caveolae. Interacts directly with G-protein alpha subunits and can functionally regulate their activity. Involved in the costimulatory signal essential for T-cell receptor (TCR)-mediated T-cell activation. Its binding to DPP4 induces T-cell proliferation and NF-kappa-B activation in a T-cell receptor/CD3-dependent manner. Recruits CTNNB1 to caveolar membranes and may regulate CTNNB1-mediated signaling through the Wnt pathway. Negatively regulates TGFB1-mediated activation of SMAD2/3 by mediating the internalization of TGFBR1 from membrane rafts leading to its subsequent degradation. Binds 20(S)-hydroxycholesterol (20(S)-OHC). This is Caveolin-1 (Cav1) from Mus musculus (Mouse).